A 604-amino-acid chain; its full sequence is Kinesin-like protein KIN-14O (604 aa).

The stretch at 22–61 forms a coiled coil; sequence MLNHDKDISALQEEISALRSRQRHLDHRRQEALDKLIDLK. The Kinesin motor domain maps to 63–387; the sequence is SIRVFCRVRP…LSFAKRARSI (325 aa). Residue 141–148 coordinates ATP; it reads GQTGTGKT. A coiled-coil region spans residues 383-443; sequence RARSIESSKE…EERKKLSSSA (61 aa). Disordered stretches follow at residues 465-511 and 565-604; these read DSAE…KTRL and SNNS…SSLT. Positions 565 to 574 are enriched in polar residues; it reads SNNSIDSTAA. Positions 593-604 are enriched in basic residues; sequence LHQHRRRMSSLT.

Belongs to the TRAFAC class myosin-kinesin ATPase superfamily. Kinesin family. KIN-14 subfamily.

The protein is Kinesin-like protein KIN-14O of Oryza sativa subsp. japonica (Rice).